The following is a 602-amino-acid chain: DNA damage-binding protein CMR1 (602 aa).

The segment at 35–85 (KEVDNKSFSSPSSQKRRKTTKKPVIKKEISEPSRRSRRIAGIKSELEDPKQ) is disordered. Residues 48–58 (QKRRKTTKKPV) are compositionally biased toward basic residues. The span at 59–68 (IKKEISEPSR) shows a compositional bias: basic and acidic residues. WD repeat units follow at residues 229–270 (ICHN…NDTK), 291–328 (RNVS…STEL), 390–430 (LHDK…KSVY), 446–484 (NSRL…KLDN), 526–569 (GRWV…LAHL), and 571–602 (EQVG…YLFE).

This sequence belongs to the WD repeat DDB2/WDR76 family.

Functionally, DNA-binding protein that binds to both single- and double-stranded DNA. Binds preferentially to UV-damaged DNA. May be involved in DNA-metabolic processes. The polypeptide is DNA damage-binding protein CMR1 (Candida albicans (strain SC5314 / ATCC MYA-2876) (Yeast)).